Here is a 652-residue protein sequence, read N- to C-terminus: MSQTHKHAIPANIADRCLINPEQYETKYKQSINDPDTFWGEQGKILDWITPYQKVKNTSFAPGNVSIKWYEDGTLNLAANCLDRHLQENGDRTAIIWEGDDTSQSKHISYRELHRDVCRFANTLLDLGIKKGDVVAIYMPMVPEAAVAMLACARIGAVHSVIFGGFSPEAVAGRIIDSSSRLVITADEGVRAGRSIPLKKNVDDALKNPNVTSVEHVIVLKRTGSDIDWQEGRDLWWRDLIEKASPEHQPEAMNAEDPLFILYTSGSTGKPKGVLHTTGGYLVYAATTFKYVFDYHPGDIYWCTADVGWVTGHSYLLYGPLACGATTLMFEGVPNWPTPARMCQVVDKHQVNILYTAPTAIRALMAEGDKAIEGTDRSSLRILGSVGEPINPEAWEWYWKKIGKEKCPVVDTWWQTETGGFMITPLPGAIELKAGSATRPFFGVQPALVDNEGHPQEGATEGNLVITDSWPGQARTLFGDHERFEQTYFSTFKNMYFSGDGARRDEDGYYWITGRVDDVLNVSGHRLGTAEIESALVAHPKIAEAAVVGIPHAIKGQAIYAYVTLNHGEEPSPELYAEVRNWVRKEIGPLATPDVLHWTDSLPKTRSGKIMRRILRKIAAGDTSNLGDTSTLADPGVVEKLLEEKQAIAMPS.

CoA-binding positions include 191-194, T311, and N335; that span reads RAGR. Residues 387–389, 411–416, D500, and R515 contribute to the ATP site; these read GEP and DTWWQT. S523 is a CoA binding site. R526 contributes to the ATP binding site. Residues V537, H539, and I542 each coordinate Mg(2+). R584 provides a ligand contact to CoA. K609 is subject to N6-acetyllysine; by Pat.

It belongs to the ATP-dependent AMP-binding enzyme family. In terms of assembly, monomer. Requires Mg(2+) as cofactor. Post-translationally, acetylated. Deacetylation by the SIR2-homolog deacetylase activates the enzyme.

The enzyme catalyses acetate + ATP + CoA = acetyl-CoA + AMP + diphosphate. Functionally, catalyzes the conversion of acetate into acetyl-CoA (AcCoA), an essential intermediate at the junction of anabolic and catabolic pathways. Acs undergoes a two-step reaction. In the first half reaction, Acs combines acetate with ATP to form acetyl-adenylate (AcAMP) intermediate. In the second half reaction, it can then transfer the acetyl group from AcAMP to the sulfhydryl group of CoA, forming the product AcCoA. Required for acetate recapture but not for acetate excretion when this organism is grown on ethanolamine. Its function is as follows. Enables the cell to use acetate during aerobic growth to generate energy via the TCA cycle, and biosynthetic compounds via the glyoxylate shunt. Acetylates CheY, the response regulator involved in flagellar movement and chemotaxis. This is Acetyl-coenzyme A synthetase from Salmonella typhimurium (strain LT2 / SGSC1412 / ATCC 700720).